Here is a 306-residue protein sequence, read N- to C-terminus: Homoserine kinase (306 aa).

90-100 (PLARGLGSSAS) serves as a coordination point for ATP.

It belongs to the GHMP kinase family. Homoserine kinase subfamily.

Its subcellular location is the cytoplasm. The catalysed reaction is L-homoserine + ATP = O-phospho-L-homoserine + ADP + H(+). The protein operates within amino-acid biosynthesis; L-threonine biosynthesis; L-threonine from L-aspartate: step 4/5. Catalyzes the ATP-dependent phosphorylation of L-homoserine to L-homoserine phosphate. This is Homoserine kinase from Staphylococcus epidermidis (strain ATCC 35984 / DSM 28319 / BCRC 17069 / CCUG 31568 / BM 3577 / RP62A).